Here is a 67-residue protein sequence, read N- to C-terminus: Large ribosomal subunit protein uL29 (67 aa).

This sequence belongs to the universal ribosomal protein uL29 family.

This Solibacter usitatus (strain Ellin6076) protein is Large ribosomal subunit protein uL29.